The chain runs to 708 residues: Metal-pseudopaline receptor CntO (708 aa).

A signal peptide spans 1-21 (MRVSVSLVLGVGLGCSSPALW). Residues 63–169 (RIEDIPQAIS…PGGTVNLVTK (107 aa)) form the TBDR plug domain. Residues 174–708 (ERFARLHASA…NLTMSLTLNY (535 aa)) form the TBDR beta-barrel domain.

Belongs to the TonB-dependent receptor family.

Its subcellular location is the cell outer membrane. Transports the metallophore pseudopaline, which is involved in the acquisition of nickel and zinc, and thus enables bacterial growth inside the host, where metal access is limited. Is probably involved in the import of pseudopaline-metal complexes. The chain is Metal-pseudopaline receptor CntO from Pseudomonas aeruginosa (strain UCBPP-PA14).